Reading from the N-terminus, the 181-residue chain is Caltractin ICL1d (181 aa).

The disordered stretch occupies residues 1-29 (MARRGQQPPPQQAPPAQKNQTGKFNPAEF). 4 consecutive EF-hand domains span residues 37–72 (EEVL…LGFE), 73–108 (AKNQ…RISE), 110–145 (DSKA…LGET), and 146–181 (MDDS…KTFA). 10 residues coordinate Ca(2+): D50, D52, T54, S56, E61, D86, D88, S90, Q92, and E97.

It belongs to the centrin family. In terms of assembly, monomer.

Its subcellular location is the cytoplasm. It is found in the cytoskeleton. Functionally, plays a fundamental role in microtubule organizing center structure and function. Component of the infraciliary lattice (ICL) and the ciliary basal bodies. The protein is Caltractin ICL1d (Icl1d) of Paramecium tetraurelia.